The primary structure comprises 91 residues: Small ribosomal subunit protein uS19m (91 aa).

This sequence belongs to the universal ribosomal protein uS19 family. Component of the mitochondrial small ribosomal subunit (mt-SSU). Mature N.crassa 74S mitochondrial ribosomes consist of a small (37S) and a large (54S) subunit. The 37S small subunit contains a 16S ribosomal RNA (16S mt-rRNA) and 32 different proteins. The 54S large subunit contains a 23S rRNA (23S mt-rRNA) and 42 different proteins.

The protein resides in the mitochondrion. Component of the mitochondrial ribosome (mitoribosome), a dedicated translation machinery responsible for the synthesis of mitochondrial genome-encoded proteins, including at least some of the essential transmembrane subunits of the mitochondrial respiratory chain. The mitoribosomes are attached to the mitochondrial inner membrane and translation products are cotranslationally integrated into the membrane. The chain is Small ribosomal subunit protein uS19m (rsm19) from Neurospora crassa (strain ATCC 24698 / 74-OR23-1A / CBS 708.71 / DSM 1257 / FGSC 987).